Here is a 186-residue protein sequence, read N- to C-terminus: DNA-invertase (186 aa).

Residues M1–G134 enclose the Resolvase/invertase-type recombinase catalytic domain. S9 functions as the O-(5'-phospho-DNA)-serine intermediate in the catalytic mechanism. The H-T-H motif DNA-binding region spans R161–P180.

The protein belongs to the site-specific recombinase resolvase family.

Functionally, performs inversion of a viral 3 kp segment (C-segment) that encodes two alternate pairs of tail fiber proteins thereby modifying the host specificity of the virus. The sequence is that of DNA-invertase (cin) from Enterobacteriaceae (Bacteriophage P1).